A 188-amino-acid chain; its full sequence is Casparian strip membrane protein 1 (188 aa).

At 1 to 24 (MKAGALELGHASKTTKSGVNRGMS) the chain is on the cytoplasmic side. A helical membrane pass occupies residues 25-45 (ILDLFIRIIAIIATLGSAIAM). The Extracellular segment spans residues 46 to 72 (GTTNETLPFFTQFVRFKAKYSDLPTFT). Asparagine 49 carries an N-linked (GlcNAc...) asparagine glycan. A helical membrane pass occupies residues 73-93 (FFVVANAIVSAYLVLSLGLSI). The Cytoplasmic segment spans residues 94-105 (YHIMRSRAQATR). A helical membrane pass occupies residues 106-126 (IALIFFDAAMLGLLTGGASAS). The Extracellular segment spans residues 127 to 159 (AAIVYLAHKGNRKTNWFPICQQYDSFCHRTSGS). Residues 160 to 180 (LVGSFAGSVLIILLIFLSAIA) form a helical membrane-spanning segment. Over 181–188 (LSRQSLNH) the chain is Cytoplasmic.

Belongs to the Casparian strip membrane proteins (CASP) family. In terms of assembly, homodimer and heterodimers.

It is found in the cell membrane. Functionally, regulates membrane-cell wall junctions and localized cell wall deposition. Required for establishment of the Casparian strip membrane domain (CSD) and the subsequent formation of Casparian strips, a cell wall modification of the root endodermis that determines an apoplastic barrier between the intraorganismal apoplasm and the extraorganismal apoplasm and prevents lateral diffusion. The polypeptide is Casparian strip membrane protein 1 (Solanum tuberosum (Potato)).